A 636-amino-acid polypeptide reads, in one-letter code: TNFAIP3-interacting protein 1 (636 aa).

Residues Glu20 to Leu73 adopt a coiled-coil conformation. Positions Gln61–Glu71 are enriched in basic and acidic residues. 2 disordered regions span residues Gln61–Pro151 and Met252–Ala283. Ser77 carries the phosphoserine modification. The interval Ser94–Gln412 is interaction with Nef. Residues Glu131–Ala142 show a composition bias toward polar residues. A coiled-coil region spans residues Ser196–Glu258. Position 284 is a phosphoserine (Ser284). Positions Val294–Tyr535 form a coiled coil. The interaction with Shigella flexneri ipah9.8 stretch occupies residues Asp351–Leu367. Ser403 is modified (phosphoserine). Residues Thr431–Ser588 are required for inhibitory activity of TNF-induced NF-kappa-B activation. Thr438 is subject to Phosphothreonine. Position 442 is a phosphoserine (Ser442). The segment at Lys452–Ala510 is ubiquitin-binding domain (UBD). The Nuclear localization signal motif lies at Gln524 to Ala530. A Phosphotyrosine modification is found at Tyr552. Arg571 carries the post-translational modification Asymmetric dimethylarginine. Residue Arg599 is modified to Asymmetric dimethylarginine; alternate. Arg599 is subject to Omega-N-methylarginine; alternate. The tract at residues Gly603 to Gln636 is disordered. The segment covering Thr623–Gln636 has biased composition (basic and acidic residues). A Phosphoserine modification is found at Ser627.

In terms of assembly, interacts with TNFAIP3 and IKBKG (polyubiquitinated); facilitates TNFAIP3-mediated de-ubiquitination of NEMO/IKBKG. Interacts with polyubiquitin. Interacts with MAPK1, SELPLG and PIK3CD. Interacts with IRAK1 (polyubiquitinated). Interacts with MYD88; the interaction is indicative for participation in an activated TLR-signaling complex. Interacts with HIV-1 matrix protein. Interacts with TAX1BP1. (Microbial infection) Interacts with Shigella flexneri ipah9.8; the interaction promotes polyubiquitination of IKBKG. In terms of processing, phosphorylation at Tyr-552 by SRC-family kinases recruits phosphoinositide-3-kinase (PI3K) PIK3CD:p85 heterodimer which results in integrin activation and leukocyte adhesion to activated endothelium during inflammation. In terms of tissue distribution, ubiquitous. Strongly expressed in peripheral blood lymphocytes, spleen and skeletal muscle, and is weakly expressed in the brain. In peripheral blood mononucleocytes, isoform 4 is mainly expressed and isoform 1 and isoform 7 are almost not expressed. Expression of isoform 1 and isoform 7 increases in leukemic cells.

Its subcellular location is the cytoplasm. The protein localises to the nucleus. Functionally, inhibits NF-kappa-B activation and TNF-induced NF-kappa-B-dependent gene expression by regulating TAX1BP1 and A20/TNFAIP3-mediated deubiquitination of IKBKG; proposed to link A20/TNFAIP3 to ubiquitinated IKBKG. Involved in regulation of EGF-induced ERK1/ERK2 signaling pathway; blocks MAPK3/MAPK1 nuclear translocation and MAPK1-dependent transcription. Increases cell surface CD4(T4) antigen expression. Involved in the anti-inflammatory response of macrophages and positively regulates TLR-induced activation of CEBPB. Involved in the prevention of autoimmunity; this function implicates binding to polyubiquitin. Involved in leukocyte integrin activation during inflammation; this function is mediated by association with SELPLG and dependent on phosphorylation by SRC-family kinases. Interacts with HIV-1 matrix protein and is packaged into virions and overexpression can inhibit viral replication. May regulate matrix nuclear localization, both nuclear import of PIC (Preintegration complex) and export of GAG polyprotein and viral genomic RNA during virion production. In case of infection, promotes association of IKBKG with Shigella flexneri E3 ubiquitin-protein ligase ipah9.8 p which in turn promotes polyubiquitination of IKBKG leading to its proteasome-dependent degradation and thus is perturbing NF-kappa-B activation during bacterial infection. The protein is TNFAIP3-interacting protein 1 (TNIP1) of Homo sapiens (Human).